A 102-amino-acid chain; its full sequence is MNILPISAFFLLYLGHSLAQENVCNLPVDEGVCRALFKRFYYEPATDSCKEFYYGGCEGNGNRFKSKKECILKCQKNKQLIKTRKRKPKKTTKPPIPIISLD.

The N-terminal stretch at 1 to 19 (MNILPISAFFLLYLGHSLA) is a signal peptide. In terms of domain architecture, BPTI/Kunitz inhibitor spans 24–74 (CNLPVDEGVCRALFKRFYYEPATDSCKEFYYGGCEGNGNRFKSKKECILKC). Disulfide bonds link C24/C74, C33/C57, and C49/C70. Residues 83 to 92 (TRKRKPKKTT) show a composition bias toward basic residues. The interval 83-102 (TRKRKPKKTTKPPIPIISLD) is disordered.

The protein belongs to the venom Kunitz-type family. In terms of assembly, interacts with mouse, bovine and human coagulation factor X (F10) (activated). Interacts with host elastase. As to expression, salivary gland (at protein level). Not detected in female carcass without head and salivary glands. Not detected in males.

It localises to the secreted. Salivary anticoagulant that inhibits plasma clotting in the host. Strongly inhibits host elastase, coagulation factors Xa (F10) and cathepsin G (CTSG). Inhibits host plasmin (PLG), kallikrein, trypsin, beta-tryptase and coagulation factor XIa (F11). The chain is Simukunin from Simulium vittatum (Striped black fly).